Here is a 170-residue protein sequence, read N- to C-terminus: Flavodoxin (170 aa).

The 161-residue stretch at 5-165 (IGLFYGTQTG…RIKSWVAQLK (161 aa)) folds into the Flavodoxin-like domain.

Belongs to the flavodoxin family. The cofactor is FMN.

In terms of biological role, low-potential electron donor to a number of redox enzymes. The polypeptide is Flavodoxin (isiB) (Nostoc sp. (strain PCC 7120 / SAG 25.82 / UTEX 2576)).